Consider the following 244-residue polypeptide: tRNA (guanine-N(1)-)-methyltransferase (244 aa).

S-adenosyl-L-methionine is bound by residues Gly112 and 132 to 137; that span reads IGDYIL.

This sequence belongs to the RNA methyltransferase TrmD family. In terms of assembly, homodimer.

The protein localises to the cytoplasm. It carries out the reaction guanosine(37) in tRNA + S-adenosyl-L-methionine = N(1)-methylguanosine(37) in tRNA + S-adenosyl-L-homocysteine + H(+). Functionally, specifically methylates guanosine-37 in various tRNAs. The chain is tRNA (guanine-N(1)-)-methyltransferase from Geobacillus kaustophilus (strain HTA426).